Reading from the N-terminus, the 683-residue chain is Multidrug resistance protein MdtO (683 aa).

The next 9 helical transmembrane spans lie at 43 to 63, 75 to 95, 100 to 120, 125 to 145, 158 to 178, 402 to 422, 426 to 446, 457 to 477, and 483 to 503; these read VILISMTFEIPFVALSLAVLF, FVAILFVVATVLEIGSLFLIY, GEPLIRLIIAGPILMGCMFLM, LGLVFFAVAIVAIYGQTFPAM, WCIVVGLYPTLLMTLIGVLWF, FGGAFCGAILALLFTLLVMPW, IVELLFVLAPIFLLGAWIATS, MVVTFALATLENVFGPVYDLV, and ALGIIIGTVVSAVIYTFVWPE.

This sequence belongs to the MdtO family. As to quaternary structure, could be part of a tripartite efflux system composed of MdtN, MdtO and MdtP.

The protein resides in the cell inner membrane. In terms of biological role, could be involved in resistance to puromycin, acriflavine and tetraphenylarsonium chloride. In Escherichia coli (strain K12), this protein is Multidrug resistance protein MdtO (mdtO).